The chain runs to 213 residues: Thymidylate kinase (213 aa).

10–17 serves as a coordination point for ATP; the sequence is GLEGAGKT.

It belongs to the thymidylate kinase family.

It carries out the reaction dTMP + ATP = dTDP + ADP. Functionally, phosphorylation of dTMP to form dTDP in both de novo and salvage pathways of dTTP synthesis. This chain is Thymidylate kinase, found in Salmonella choleraesuis (strain SC-B67).